The primary structure comprises 1160 residues: Transcription factor tau 138 kDa subunit (1160 aa).

Residues 475–533 (PNSKKTPNKNKRKRQVKNSTNASVAGNISNPKRIKLEQHVSTAQEPKSAEDSPSSNGGT) are disordered. A compositionally biased stretch (basic residues) spans 480–490 (TPNKNKRKRQV). 2 stretches are compositionally biased toward polar residues: residues 491 to 504 (KNSTNASVAGNISN) and 513 to 529 (HVSTAQEPKSAEDSPSS). Residue serine 546 is modified to Phosphoserine.

In terms of assembly, component of the TFIIIC complex composed of TFC1, TFC3, TFC4, TFC6, TFC7 and TFC8. The subunits are organized in two globular domains, tauA and tauB, connected by a proteolysis-sensitive and flexible linker. Interacts with TFC1, TFC4 and TFC6.

It localises to the nucleus. The protein resides in the mitochondrion. In terms of biological role, TFIIIC mediates tRNA and 5S RNA gene activation by binding to intragenic promoter elements. Upstream of the transcription start site, TFIIIC assembles the initiation complex TFIIIB-TFIIIC-tDNA, which is sufficient for RNA polymerase III recruitment and function. Part of the tauB domain of TFIIIC that binds boxB DNA promoter sites of tRNA and similar genes. TFC3 is essential for cell viability. Cooperates with TFC6 in DNA binding. In Saccharomyces cerevisiae (strain ATCC 204508 / S288c) (Baker's yeast), this protein is Transcription factor tau 138 kDa subunit (TFC3).